The sequence spans 358 residues: Ethanol acetyltransferase 1 (358 aa).

The region spanning 59–166 (PIVFIHGLFG…NAPINQPHIS (108 aa)) is the AB hydrolase-1 domain. Residues Ser-132, Asp-156, and His-305 each act as charge relay system in the active site.

The protein belongs to the AB hydrolase superfamily.

Its subcellular location is the mitochondrion. It carries out the reaction ethanol + acetyl-CoA = ethyl acetate + CoA. It catalyses the reaction acetyl-CoA + H2O = acetate + CoA + H(+). The catalysed reaction is ethyl acetate + H2O = ethanol + acetate + H(+). Alcohol acetyltransferase that catalyzes the synthesis of ethyl acetate from ethanol and acetyl-CoA. Can also function as a thioesterase by hydrolyzing acetyl-CoA in the absence of ethanol, as well as esterase hydrolyzing ethyl acetate. In Eremothecium cymbalariae (strain CBS 270.75 / DBVPG 7215 / KCTC 17166 / NRRL Y-17582) (Yeast), this protein is Ethanol acetyltransferase 1 (EAT1).